The sequence spans 212 residues: Probable transaldolase (212 aa).

The Schiff-base intermediate with substrate role is filled by K84.

The protein belongs to the transaldolase family. Type 3B subfamily.

It is found in the cytoplasm. The catalysed reaction is D-sedoheptulose 7-phosphate + D-glyceraldehyde 3-phosphate = D-erythrose 4-phosphate + beta-D-fructose 6-phosphate. It functions in the pathway carbohydrate degradation; pentose phosphate pathway; D-glyceraldehyde 3-phosphate and beta-D-fructose 6-phosphate from D-ribose 5-phosphate and D-xylulose 5-phosphate (non-oxidative stage): step 2/3. Functionally, transaldolase is important for the balance of metabolites in the pentose-phosphate pathway. This Bacillus pumilus (strain SAFR-032) protein is Probable transaldolase.